Here is a 140-residue protein sequence, read N- to C-terminus: Large ribosomal subunit protein uL11 (140 aa).

It belongs to the universal ribosomal protein uL11 family. In terms of assembly, part of the ribosomal stalk of the 50S ribosomal subunit. Interacts with L10 and the large rRNA to form the base of the stalk. L10 forms an elongated spine to which L12 dimers bind in a sequential fashion forming a multimeric L10(L12)X complex. Post-translationally, one or more lysine residues are methylated.

Forms part of the ribosomal stalk which helps the ribosome interact with GTP-bound translation factors. This chain is Large ribosomal subunit protein uL11, found in Lawsonia intracellularis (strain PHE/MN1-00).